The primary structure comprises 519 residues: Apolipoprotein N-acyltransferase (519 aa).

A run of 6 helical transmembrane segments spans residues 6 to 26 (APLG…IWIF), 47 to 67 (LTAI…ITGV), 83 to 103 (IAAF…FVWL), 126 to 146 (LFIL…SHSI), 174 to 194 (LLSA…IDFL), and 206 to 226 (WHYF…GWLL). The CN hydrolase domain occupies 244-482 (IQGNIPNQIK…YEIHAAPIYR (239 aa)). The active-site Proton acceptor is Glu-285. Lys-343 is an active-site residue. Cys-394 acts as the Nucleophile in catalysis. The chain crosses the membrane as a helical span at residues 496-516 (VVFLLLVVSAIAWLYQIVFPL).

The protein belongs to the CN hydrolase family. Apolipoprotein N-acyltransferase subfamily.

The protein localises to the cell inner membrane. It catalyses the reaction N-terminal S-1,2-diacyl-sn-glyceryl-L-cysteinyl-[lipoprotein] + a glycerophospholipid = N-acyl-S-1,2-diacyl-sn-glyceryl-L-cysteinyl-[lipoprotein] + a 2-acyl-sn-glycero-3-phospholipid + H(+). The protein operates within protein modification; lipoprotein biosynthesis (N-acyl transfer). Functionally, catalyzes the phospholipid dependent N-acylation of the N-terminal cysteine of apolipoprotein, the last step in lipoprotein maturation. This chain is Apolipoprotein N-acyltransferase, found in Synechocystis sp. (strain ATCC 27184 / PCC 6803 / Kazusa).